Consider the following 404-residue polypeptide: Cysteine desulfurase IscS (404 aa).

Residues 75 to 76, Asn155, Gln183, and 203 to 205 each bind pyridoxal 5'-phosphate; these read AT and TGH. At Lys206 the chain carries N6-(pyridoxal phosphate)lysine. Thr243 contacts pyridoxal 5'-phosphate. Cys328 functions as the Cysteine persulfide intermediate in the catalytic mechanism. A [2Fe-2S] cluster-binding site is contributed by Cys328.

This sequence belongs to the class-V pyridoxal-phosphate-dependent aminotransferase family. NifS/IscS subfamily. Homodimer. Forms a heterotetramer with IscU, interacts with other sulfur acceptors. It depends on pyridoxal 5'-phosphate as a cofactor.

It localises to the cytoplasm. The enzyme catalyses (sulfur carrier)-H + L-cysteine = (sulfur carrier)-SH + L-alanine. It participates in cofactor biosynthesis; iron-sulfur cluster biosynthesis. Functionally, master enzyme that delivers sulfur to a number of partners involved in Fe-S cluster assembly, tRNA modification or cofactor biosynthesis. Catalyzes the removal of elemental sulfur atoms from cysteine to produce alanine. Functions as a sulfur delivery protein for Fe-S cluster synthesis onto IscU, an Fe-S scaffold assembly protein, as well as other S acceptor proteins. This chain is Cysteine desulfurase IscS, found in Enterobacter sp. (strain 638).